We begin with the raw amino-acid sequence, 224 residues long: Response regulator protein GraR (224 aa).

Residues 2 to 115 form the Response regulatory domain; it reads QVLLVEDDQT…VLIAKLQAIY (114 aa). Residue Asp-51 is modified to 4-aspartylphosphate. Positions 126 to 224 form a DNA-binding region, ompR/PhoB-type; the sequence is KRTLNWQDAL…KVGKGYMAHE (99 aa).

Phosphorylated by GraS.

Its subcellular location is the cytoplasm. In terms of biological role, member of the two-component regulatory system GraR/GraS involved in resistance against cationic antimicrobial peptides (CAMPs). This Staphylococcus haemolyticus (strain JCSC1435) protein is Response regulator protein GraR (graR).